A 428-amino-acid chain; its full sequence is MLGALLLSGAVHAAVQPLDSVVAIVDNDVIMKSQMDQRVREVQQTIAKRGSGVPPAADLQPQVLDRLILENLQLQMGERSGIRVSDDELNQAIGTIAQRNNMSVEQFRAALAHDGLSYEDAREQVRREMIISRVRQRRVAERIQVSEQEVKNFLASDQGKAQLSEEFHLANILIATPDSASSDAIQAAAVKAKSIYDQLKKGADFAKIAATTSSSENALEGGDMGWRKAAQLPPPFGDMLSSMPIGDVTPPARTPGGFIILKLLEKRGGQGQAQMRDEVHVRHILIKPSEIRSEEATKLLAQKIYERIENGEDFATLAKSFSEDPGSALNGGDLNWVDPNSLVPEFRDVMSSTPQGELSKPFKTAYGWHVLEVLGRRATDATGQARDQQALSVLRNRKYDEELQTWLRQIRDEAYVEIKLPGATQAAQ.

A signal peptide spans 1 to 13 (MLGALLLSGAVHA). PpiC domains lie at 164–265 (SEEF…KLLE) and 276–375 (RDEV…EVLG).

Its subcellular location is the periplasm. It carries out the reaction [protein]-peptidylproline (omega=180) = [protein]-peptidylproline (omega=0). In terms of biological role, chaperone involved in the correct folding and assembly of outer membrane proteins. Recognizes specific patterns of aromatic residues and the orientation of their side chains, which are found more frequently in integral outer membrane proteins. May act in both early periplasmic and late outer membrane-associated steps of protein maturation. This chain is Chaperone SurA, found in Pseudomonas syringae pv. tomato (strain ATCC BAA-871 / DC3000).